The sequence spans 345 residues: MEAFSQLVQQAAQAFEKARTPAELEDAKAAFLGKSGELTARMKQLASLPVDEKKARGAEINAAKQQVEAALTARRQAMADAELAQQLRAESLDVTLPGRRRGSGGLHPITRAMERIEAIFGSMGFEVADGPEIETDWFNFTALNTPADHPARSMHDTFYVEGGQVLRTHTSPMQIRHAVRHVKAHRAALDAGLPMPEIRVIAPGRTYRVDSDATHSPMFHQVEGLWVGQNISFKDLKSVYVSFIRAFFETSDLQIRFRPSYFPFTEPSAEIDMMFGSGPLKGRWLEVSGSGQVHPQVIRNMGLDPERYIGFAFGSGIDRLAMLRYGVSDLRLFFDGDLRFLSQFK.

Glutamate 266 is a binding site for Mg(2+).

This sequence belongs to the class-II aminoacyl-tRNA synthetase family. Phe-tRNA synthetase alpha subunit type 1 subfamily. Tetramer of two alpha and two beta subunits. It depends on Mg(2+) as a cofactor.

The protein resides in the cytoplasm. The catalysed reaction is tRNA(Phe) + L-phenylalanine + ATP = L-phenylalanyl-tRNA(Phe) + AMP + diphosphate + H(+). This Methylibium petroleiphilum (strain ATCC BAA-1232 / LMG 22953 / PM1) protein is Phenylalanine--tRNA ligase alpha subunit.